We begin with the raw amino-acid sequence, 453 residues long: Ezy-1 protein (453 aa).

Positions 1–28 (MQLSNSLRSARSAAASSGCALASRPVVA) are cleaved as a signal peptide. 3 disordered regions span residues 167 to 187 (SDGGGDESGDRDTADAADADG), 272 to 307 (TGKAEPGAEGDDGEGEEEGEAQDVGEDAVDSSSSGG), and 412 to 453 (SAGD…SPNM). Over residues 279–300 (AEGDDGEGEEEGEAQDVGEDAV) the composition is skewed to acidic residues. The span at 415–425 (DGHEPEPKRPE) shows a compositional bias: basic and acidic residues.

The sequence is that of Ezy-1 protein (Ezy-1) from Chlamydomonas reinhardtii (Chlamydomonas smithii).